We begin with the raw amino-acid sequence, 374 residues long: Putative F-box protein At3g17480 (374 aa).

The F-box domain occupies 6-52 (SSPMSVLTEDLVEDILSRVPATSLVRLRSTCKQWNAILNDRRFIKKH).

The polypeptide is Putative F-box protein At3g17480 (Arabidopsis thaliana (Mouse-ear cress)).